A 594-amino-acid chain; its full sequence is Glutamate decarboxylase 1 (594 aa).

Residues 1 to 13 (MASSTPSSSATSS) are compositionally biased toward low complexity. A disordered region spans residues 1–22 (MASSTPSSSATSSNAGADPNTA). Ser78 bears the Phosphoserine mark. 4-aminobutanoate is bound at residue 190-192 (QLS). At Lys405 the chain carries N6-(pyridoxal phosphate)lysine. Arg567 is a 4-aminobutanoate binding site.

The protein belongs to the group II decarboxylase family. In terms of assembly, homodimer. Requires pyridoxal 5'-phosphate as cofactor.

It carries out the reaction L-glutamate + H(+) = 4-aminobutanoate + CO2. Catalyzes the synthesis of the inhibitory neurotransmitter gamma-aminobutyric acid (GABA) with pyridoxal 5'-phosphate as cofactor. The chain is Glutamate decarboxylase 1 (GAD1) from Canis lupus familiaris (Dog).